The following is a 786-amino-acid chain: MLLFPSTSLRLFFFLFLLFSSCFLQIRGDDDDDDISDDNIKVDPSLKFENPSLRQAYIALQSWKQAIFSDPFNFTANWNGSDVCSYNGIFCAPSPSSPKTRVVAGIDLNHADMAGYLPRELGLLTDLALFHLNSNRFCGEVPLTFKHMKLLFELDLSNNRFVGKFPNVVLSLPSLKFLDLRYNEFEGSIPSKLFDKELDAIFLNHNRFMFGIPENMGNSPVSALVLADNDLGGCIPGSIGLMGKTLNEIILSNDNLTGCLPPQIGNLKNVTVFDISFNRLSGPLPSSIGNMKSLEQLNVANNRFTGVIPSSICQLSNLENFTYSSNFFTGDAPRCVALLGDNVVVNGSMNCIDGKEDQRSSKECSSPASRSVDCSKFGCNNFFSPPPPSFKMSPTVRVLPPPPPSSKMSPTFRATPPPPSSKMSPSFRATPPPPSSKMSPSFRATPPPPSSKMSPSVKAYPPPPPPPEYEPSPPPPSSEMSPSVRAYPPPPPLSPPPPSPPPPYIYSSPPPPSPSPPPPYIYSSPPPVVNCPPTTQSPPPPKYEQTPSPREYYPSPSPPYYQYTSSPPPPTYYATQSPPPPPPPTYYAVQSPPPPPPVYYPPVTASPPPPPVYYTPVIQSPPPPPVYYSPVTQSPPPPPPVYYPPVTQSPPPSPVYYPPVTQSPPPPPVYYLPVTQSPPPPSPVYYPPVAKSPPPPSPVYYPPVTQSPPPPSTPVEYHPPASPNQSPPPEYQSPPPKGCNDSPSNDHHYQTPTPPSLPPPYYEDTPLPPIRGVSYASPPPPSIPYY.

Positions 1–28 (MLLFPSTSLRLFFFLFLLFSSCFLQIRG) are cleaved as a signal peptide. Residues Asn-73 and Asn-79 are each glycosylated (N-linked (GlcNAc...) asparagine). LRR repeat units follow at residues 100 to 124 (TRVV…LGLL), 125 to 147 (TDLA…TFKH), 149 to 172 (KLLF…VLSL), 173 to 196 (PSLK…LFDK), 198 to 219 (LDAI…MGNS), 221 to 243 (VSAL…GLMG), 244 to 267 (KTLN…IGNL), 268 to 291 (KNVT…IGNM), and 292 to 315 (KSLE…ICQL). Residues Asn-255 and Asn-269 are each glycosylated (N-linked (GlcNAc...) asparagine). N-linked (GlcNAc...) asparagine glycosylation is found at Asn-320 and Asn-346. 4 disordered regions span residues 352–372 (IDGK…SRSV), 390–589 (FKMS…YYAV), 624–645 (PPVY…YYPP), and 694–786 (PPPS…IPYY). Residues 353–362 (DGKEDQRSSK) show a composition bias toward basic and acidic residues. Residues 384–786 (SPPPPSFKMS…SPPPPSIPYY (403 aa)) form a contains the Ser-Pro(4) repeats region. Pro residues-rich tracts occupy residues 460–477 (YPPP…PPPS), 487–542 (YPPP…PPPK), and 566–589 (SPPP…YYAV). Pro residues-rich tracts occupy residues 694 to 713 (PPPS…PPST), 720 to 737 (PASP…PPPK), 752 to 769 (PTPP…PLPP), and 777 to 786 (SPPPPSIPYY).

Post-translationally, hydroxylated on proline residues in the S-P-P-P-P repeat. In terms of processing, O-glycosylated on hydroxyprolines. Mostly expressed in roots, also present in stems at low levels. In roots, confined to differentiation zones, the collet, and meristematic cells of tips.

The protein resides in the secreted. Its subcellular location is the cell wall. Modulates cell morphogenesis by regulating cell wall formation and assembly, and/or growth polarization. Together with LRX2, component of the extracellular mechanism regulating root hair morphogenesis and elongation. This is Leucine-rich repeat extensin-like protein 2 (LRX2) from Arabidopsis thaliana (Mouse-ear cress).